The following is a 319-amino-acid chain: Transaldolase (319 aa).

Lys131 serves as the catalytic Schiff-base intermediate with substrate.

It belongs to the transaldolase family. Type 1 subfamily. In terms of assembly, homodimer.

Its subcellular location is the cytoplasm. The enzyme catalyses D-sedoheptulose 7-phosphate + D-glyceraldehyde 3-phosphate = D-erythrose 4-phosphate + beta-D-fructose 6-phosphate. The protein operates within carbohydrate degradation; pentose phosphate pathway; D-glyceraldehyde 3-phosphate and beta-D-fructose 6-phosphate from D-ribose 5-phosphate and D-xylulose 5-phosphate (non-oxidative stage): step 2/3. In terms of biological role, transaldolase is important for the balance of metabolites in the pentose-phosphate pathway. This is Transaldolase from Wigglesworthia glossinidia brevipalpis.